A 541-amino-acid chain; its full sequence is Nuclear receptor subfamily 5 group A member 2 (541 aa).

Over residues 1-10 the composition is skewed to polar residues; the sequence is MSSNSDTGDL. The disordered stretch occupies residues 1-35; it reads MSSNSDTGDLQESLKHGLTPIGAGLPDRHGSPIPA. Residues 83-154 constitute a DNA-binding region (nuclear receptor); sequence EELCPVCGDK…KCLSVGMKLE (72 aa). Residues cysteine 86, cysteine 89, cysteine 103, cysteine 106, cysteine 122, cysteine 128, cysteine 138, and cysteine 141 each contribute to the Zn(2+) site. 2 NR C4-type zinc fingers span residues 86-106 and 122-146; these read CPVCGDKVSGYHYGLLTCESC and CIENQNCQIDKTQRKRCPYCRFQKC. The interval 152–167 is C-terminal extension (CTE); that stretch reads KLEAVRADRMRGGRNK. The FTZ-F1 box signature appears at 168–187; sequence FGPMYKRDRALKQQKKALIR. Lysine 270 participates in a covalent cross-link: Glycyl lysine isopeptide (Lys-Gly) (interchain with G-Cter in SUMO1). Positions 300-539 constitute an NR LBD domain; the sequence is SIPHLILELL…NLLIEMLHAK (240 aa). A phospholipid derivative contacts are provided by residues 421–424, tyrosine 516, and lysine 520; that span reads GATL. Positions 528–539 are AF-2; sequence YNNLLIEMLHAK.

It belongs to the nuclear hormone receptor family. NR5 subfamily. As to quaternary structure, monomer; Binds DNA as a monomer. Interacts with nuclear receptor corepressors NR0B1 and NR0B2; repressing NR5A2 nuclear receptor activity. Interacts with nuclear receptor coactivators CTNNB1, PPARGC1A and NCOA2; interaction takes place following ligand-binding and promotes target gene activation. Interacts (when sumoylated) with GPS2; interaction with GPS2 onto hepatic acute phase protein promoters prevents N-Cor corepressor complex dissociation. Interacts with HNF1A. Interacts with GRIP1. In terms of processing, sumoylated by SUMO1 at Lys-270 during the hepatic acute phase response, leading to promote interaction with GPS2 and prevent N-Cor corepressor complex dissociation. In terms of tissue distribution, abundantly expressed in pancreas, less in liver, very low levels in heart and lung. Expressed in the Hep-G2 cell line. Isoform 1 and isoform 2 seem to be present in fetal and adult liver and Hep-G2 cells.

The protein resides in the nucleus. The protein localises to the chromosome. Activated by synthetic agonists RR-RJW100, SR-RJW100, endo sulfamide compound 6N and GSK8470. Functionally, orphan nuclear receptor that binds DNA as a monomer to the 5'-TCAAGGCCA-3' sequence and controls expression of target genes: regulates key biological processes, such as early embryonic development, cholesterol and bile acid synthesis pathways, as well as liver and pancreas morphogenesis. Ligand-binding causes conformational change which causes recruitment of coactivators, promoting target gene activation. The specific ligand is unknown, but specific phospholipids, such as phosphatidylethanolamine, phosphatidylserine, dilauroyl phosphatidylcholine and diundecanoyl phosphatidylcholine can act as ligand in vitro. Acts as a pioneer transcription factor, which unwraps target DNA from histones and elicits local opening of closed chromatin. Plays a central role during preimplantation stages of embryonic development. Plays a minor role in zygotic genome activation (ZGA) by regulating a small set of two-cell stage genes. Plays a major role in morula development (2-16 cells embryos) by acting as a master regulator at the 8-cell stage, controlling expression of lineage-specifying transcription factors and genes involved in mitosis, telomere maintenance and DNA repair. Zygotic NR5A2 binds to both closed and open chromatin with other transcription factors, often at SINE B1/Alu repeats DNA elements, promoting chromatin accessibility at nearby regulatory regions. Also involved in the epiblast stage of development and embryonic stem cell pluripotency, by promoting expression of POU5F1/OCT4. Regulates other processes later in development, such as formation of connective tissue in lower jaw and middle ear, neural stem cell differentiation, ovarian follicle development and Sertoli cell differentiation. Involved in exocrine pancreas development and acinar cell differentiation. Acts as an essential transcriptional regulator of lipid metabolism. Key regulator of cholesterol 7-alpha-hydroxylase gene (CYP7A) expression in liver. Also acts as a negative regulator of inflammation in different organs, such as, liver and pancreas. Protects against intestinal inflammation via its ability to regulate glucocorticoid production. Plays an anti-inflammatory role during the hepatic acute phase response by acting as a corepressor: inhibits the hepatic acute phase response by preventing dissociation of the N-Cor corepressor complex. Acts as a regulator of immunity by promoting lymphocyte T-cell development, proliferation and effector functions. Also involved in resolution of endoplasmic reticulum stress in the liver. In constrast to isoform 1 and isoform 2, does not induce cholesterol 7-alpha-hydroxylase gene (CYP7A) promoter activity. In terms of biological role, (Microbial infection) Plays a crucial role for hepatitis B virus gene transcription and DNA replication. Mechanistically, synergistically cooperates with HNF1A to up-regulate the activity of one of the critical cis-elements in the hepatitis B virus genome enhancer II (ENII). The polypeptide is Nuclear receptor subfamily 5 group A member 2 (Homo sapiens (Human)).